The sequence spans 378 residues: WUSCHEL-related homeobox 9 (378 aa).

Disordered stretches follow at residues 1-60 (MASS…NPKP) and 123-173 (KHSL…GSQM). Low complexity predominate over residues 32 to 42 (SASHRSSPFSS). The span at 45–54 (EVERSPEPKP) shows a compositional bias: basic and acidic residues. A DNA-binding region (homeobox; WUS-type) is located at residues 51–115 (EPKPRWNPKP…NRKSRSKHKL (65 aa)). 2 stretches are compositionally biased toward low complexity: residues 137-152 (PSAS…SSKS) and 161-171 (KNNTNLSLGGS).

Belongs to the WUS homeobox family. Expressed in the basal cell and later at the boundary between suspensor and proembryo. Expressed at low levels in proliferating tissues post embryonically. Detected in vegetative shoot apical meristem, leaf primordia, floral meristems, emerging floral organs, epidermal layer of the placenta and in the upper portion of the root meristematic zone.

Its subcellular location is the nucleus. It is found in the cytoplasm. Homeodomain transcription factor required for meristem growth and early development. Promotes cell proliferation and prevents premature differentiation in meristematic tissues during postembryonic development. Essential for maintaining tissue growth during embryogenesis. May act by repressing TSS to promote meristematic proliferation. Involved in the transcriptional activation of a subset of cytokinin response factors. May act as a negative regulator of cytokinin signaling in the dark. The chain is WUSCHEL-related homeobox 9 from Arabidopsis thaliana (Mouse-ear cress).